Consider the following 767-residue polypeptide: Lysyl oxidase homolog 2 (767 aa).

Residues 1 to 19 (MLVTHIFLLTLSLSVPTLG) form the signal peptide. 4 consecutive SRCR domains span residues 51-152 (VRLA…VQCS), 181-295 (IRAI…VSCT), 319-418 (VRLR…VRCN), and 428-537 (VRLS…VSCV). 9 cysteine pairs are disulfide-bonded: Cys-77–Cys-141, Cys-90–Cys-151, Cys-121–Cys-131, Cys-211–Cys-284, Cys-224–Cys-294, Cys-258–Cys-268, Cys-344–Cys-407, Cys-357–Cys-417, and Cys-388–Cys-398. An N-linked (GlcNAc...) asparagine glycan is attached at Asn-281. Asn-448 carries N-linked (GlcNAc...) asparagine glycosylation. 3 cysteine pairs are disulfide-bonded: Cys-457–Cys-523, Cys-470–Cys-536, and Cys-504–Cys-514. Positions 541–744 (PDLVLNAALV…WMYNCHIGGS (204 aa)) are lysyl-oxidase like. Ca(2+) contacts are provided by Asp-542 and Leu-543. 4 disulfides stabilise this stretch: Cys-566–Cys-618, Cys-572–Cys-688, Cys-650–Cys-666, and Cys-656–Cys-678. Cu cation contacts are provided by His-619, His-621, and His-623. A glycan (N-linked (GlcNAc...) asparagine) is linked at Asn-637. Residues 646 to 682 (KASFCLEDSECETDVQKQYACANFGEQGITVGCWDVY) constitute a cross-link (lysine tyrosylquinone (Lys-Tyr)). Tyr-682 is modified (2',4',5'-topaquinone). 4 residues coordinate Ca(2+): Glu-715, Asp-717, Asn-720, and Asn-721. The cysteines at positions 725 and 739 are disulfide-linked.

This sequence belongs to the lysyl oxidase family. The cofactor is Cu cation. Lysine tyrosylquinone residue is required as a cofactor. Post-translationally, the lysine tyrosylquinone cross-link (LTQ) is generated by condensation of the epsilon-amino group of a lysine with a topaquinone produced by oxidation of tyrosine.

The protein resides in the secreted. The protein localises to the extracellular space. It is found in the extracellular matrix. Its subcellular location is the basement membrane. It localises to the nucleus. The protein resides in the chromosome. The protein localises to the endoplasmic reticulum. The catalysed reaction is L-lysyl-[protein] + O2 + H2O = (S)-2-amino-6-oxohexanoyl-[protein] + H2O2 + NH4(+). Mediates the post-translational oxidative deamination of lysine residues on target proteins leading to the formation of deaminated lysine (allysine). Acts as a transcription corepressor and specifically mediates deamination of trimethylated 'Lys-4' of histone H3 (H3K4me3), a specific tag for epigenetic transcriptional activation. Shows no activity against histone H3 when it is trimethylated on 'Lys-9' (H3K9me3) or 'Lys-27' (H3K27me3) or when 'Lys-4' is monomethylated (H3K4me1) or dimethylated (H3K4me2). Also mediates deamination of methylated TAF10, a member of the transcription factor IID (TFIID) complex, which induces release of TAF10 from promoters, leading to inhibition of TFIID-dependent transcription. LOXL2-mediated deamination of TAF10 results in transcriptional repression of genes required for embryonic stem cell pluripotency. Involved in epithelial to mesenchymal transition (EMT) and participates in repression of E-cadherin, probably by mediating deamination of histone H3. When secreted into the extracellular matrix, promotes cross-linking of extracellular matrix proteins by mediating oxidative deamination of peptidyl lysine residues in precursors to fibrous collagen and elastin. Acts as a regulator of sprouting angiogenesis, probably via collagen IV scaffolding. Acts as a regulator of chondrocyte differentiation, probably by regulating expression of factors that control chondrocyte differentiation. The protein is Lysyl oxidase homolog 2 (loxl2) of Xenopus tropicalis (Western clawed frog).